The following is a 686-amino-acid chain: DNA ligase (686 aa).

Residues 31–35 (DSEYD), 80–81 (SL), and E109 contribute to the NAD(+) site. The active-site N6-AMP-lysine intermediate is K111. Residues R132, E166, K280, and K304 each coordinate NAD(+). Zn(2+) is bound by residues C430, C433, C448, and C453. Positions 611 to 686 (NVEGILSGKT…IWSEQDLLDL (76 aa)) constitute a BRCT domain.

This sequence belongs to the NAD-dependent DNA ligase family. LigA subfamily. Mg(2+) serves as cofactor. Requires Mn(2+) as cofactor.

The catalysed reaction is NAD(+) + (deoxyribonucleotide)n-3'-hydroxyl + 5'-phospho-(deoxyribonucleotide)m = (deoxyribonucleotide)n+m + AMP + beta-nicotinamide D-nucleotide.. In terms of biological role, DNA ligase that catalyzes the formation of phosphodiester linkages between 5'-phosphoryl and 3'-hydroxyl groups in double-stranded DNA using NAD as a coenzyme and as the energy source for the reaction. It is essential for DNA replication and repair of damaged DNA. The polypeptide is DNA ligase (Lactococcus lactis subsp. cremoris (strain SK11)).